Consider the following 328-residue polypeptide: D-cysteine desulfhydrase (328 aa).

Position 51 is an N6-(pyridoxal phosphate)lysine (Lys51).

It belongs to the ACC deaminase/D-cysteine desulfhydrase family. Homodimer. Pyridoxal 5'-phosphate serves as cofactor.

It carries out the reaction D-cysteine + H2O = hydrogen sulfide + pyruvate + NH4(+) + H(+). Functionally, catalyzes the alpha,beta-elimination reaction of D-cysteine and of several D-cysteine derivatives. It could be a defense mechanism against D-cysteine. The polypeptide is D-cysteine desulfhydrase (Salmonella paratyphi B (strain ATCC BAA-1250 / SPB7)).